A 273-amino-acid chain; its full sequence is Pyridoxal phosphate homeostasis protein (273 aa).

A Phosphoserine modification is found at Ser6. Lys47 carries the post-translational modification N6-(pyridoxal phosphate)lysine. Tyr69 is modified (phosphotyrosine). At Lys125 the chain carries N6-succinyllysine. 2 positions are modified to phosphoserine: Ser226 and Ser244. A compositionally biased stretch (basic and acidic residues) spans 251 to 260; sequence DYSKKTDKPA. The disordered stretch occupies residues 251–273; that stretch reads DYSKKTDKPAAELQAPEEVAQAH.

This sequence belongs to the pyridoxal phosphate-binding protein YggS/PROSC family.

Pyridoxal 5'-phosphate (PLP)-binding protein, which may be involved in intracellular homeostatic regulation of pyridoxal 5'-phosphate (PLP), the active form of vitamin B6. This chain is Pyridoxal phosphate homeostasis protein, found in Bos taurus (Bovine).